The primary structure comprises 413 residues: Probable tRNA pseudouridine synthase D (413 aa).

Asp97 serves as the catalytic Nucleophile. Residues 167 to 370 (AAPNYYGYQR…YGTYRRVRLE (204 aa)) enclose the TRUD domain.

Belongs to the pseudouridine synthase TruD family.

The enzyme catalyses uridine(13) in tRNA = pseudouridine(13) in tRNA. Could be responsible for synthesis of pseudouridine from uracil-13 in transfer RNAs. In Pyrobaculum aerophilum (strain ATCC 51768 / DSM 7523 / JCM 9630 / CIP 104966 / NBRC 100827 / IM2), this protein is Probable tRNA pseudouridine synthase D.